Here is a 358-residue protein sequence, read N- to C-terminus: Ion-translocating oxidoreductase complex subunit D (358 aa).

7 consecutive transmembrane segments (helical) span residues 16–36, 38–58, 68–90, 128–148, 206–226, 236–256, and 286–306; these read VSRT…FGLW, FGWP…VFEV, IRPF…TLPP, AMLV…VGLL, FVPG…GLLL, IPLA…FLAP, and PVTT…VFVI.

Belongs to the NqrB/RnfD family. As to quaternary structure, the complex is composed of six subunits: RnfA, RnfB, RnfC, RnfD, RnfE and RnfG. The cofactor is FMN.

It localises to the cellular chromatophore membrane. Its function is as follows. Part of a membrane-bound complex that couples electron transfer with translocation of ions across the membrane. Required for nitrogen fixation. Involved in electron transfer to nitrogenase. The protein is Ion-translocating oxidoreductase complex subunit D of Rhodobacter capsulatus (Rhodopseudomonas capsulata).